The sequence spans 711 residues: Probable cadmium-transporting ATPase (711 aa).

The 64-residue stretch at 3-66 (EKTVYRVDGL…AGAFEHLKII (64 aa)) folds into the HMA domain. The Cd(2+) site is built by C14 and C17. Helical transmembrane passes span 89 to 109 (WRLLLSGLFIAVGYASQIMNG), 111 to 131 (DFYLTNALFIFAIFIGGYSLF), 151 to 171 (IAIIGAAFIGEWAEGSIVVIL), 317 to 337 (TPAIIVIAALIATVPPLLFGG), and 347 to 367 (LSVLVVGCPCALVVSTPVAIV). D398 functions as the 4-aspartylphosphate intermediate in the catalytic mechanism. A helical transmembrane segment spans residues 669–689 (VIKLIALLLVIPGWLTLWIAI).

This sequence belongs to the cation transport ATPase (P-type) (TC 3.A.3) family. Type IB subfamily.

It localises to the cell membrane. The enzyme catalyses Cd(2+)(in) + ATP + H2O = Cd(2+)(out) + ADP + phosphate + H(+). In terms of biological role, couples the hydrolysis of ATP with the export of cadmium. This chain is Probable cadmium-transporting ATPase (cadA), found in Listeria monocytogenes.